The chain runs to 1124 residues: DNA-directed RNA polymerase subunit Rpo2 (1124 aa).

Positions 1061, 1064, 1079, and 1082 each coordinate Zn(2+).

Belongs to the RNA polymerase beta chain family. As to quaternary structure, part of the 13-subunit RNA polymerase complex. Zn(2+) is required as a cofactor.

Its subcellular location is the cytoplasm. The catalysed reaction is RNA(n) + a ribonucleoside 5'-triphosphate = RNA(n+1) + diphosphate. In terms of biological role, DNA-dependent RNA polymerase (RNAP) catalyzes the transcription of DNA into RNA using the four ribonucleoside triphosphates as substrates. This subunit is involved in DNA promoter recognition. This chain is DNA-directed RNA polymerase subunit Rpo2, found in Saccharolobus solfataricus (strain ATCC 35092 / DSM 1617 / JCM 11322 / P2) (Sulfolobus solfataricus).